Here is a 133-residue protein sequence, read N- to C-terminus: NADPH-dependent 7-cyano-7-deazaguanine reductase (133 aa).

Cysteine 49 serves as the catalytic Thioimide intermediate. Aspartate 56 (proton donor) is an active-site residue. Residues 71-73 (IEL) and 90-91 (HE) contribute to the substrate site.

The protein belongs to the GTP cyclohydrolase I family. QueF type 1 subfamily.

It is found in the cytoplasm. The catalysed reaction is 7-aminomethyl-7-carbaguanine + 2 NADP(+) = 7-cyano-7-deazaguanine + 2 NADPH + 3 H(+). It functions in the pathway tRNA modification; tRNA-queuosine biosynthesis. In terms of biological role, catalyzes the NADPH-dependent reduction of 7-cyano-7-deazaguanine (preQ0) to 7-aminomethyl-7-deazaguanine (preQ1). The polypeptide is NADPH-dependent 7-cyano-7-deazaguanine reductase (Leptospira interrogans serogroup Icterohaemorrhagiae serovar copenhageni (strain Fiocruz L1-130)).